The chain runs to 306 residues: Curved DNA-binding protein (306 aa).

A J domain is found at 5–69 (DYYAIMGVKP…QRRAEYDQMW (65 aa)).

It is found in the cytoplasm. The protein localises to the nucleoid. Functionally, DNA-binding protein that preferentially recognizes a curved DNA sequence. It is probably a functional analog of DnaJ; displays overlapping activities with DnaJ, but functions under different conditions, probably acting as a molecular chaperone in an adaptive response to environmental stresses other than heat shock. Lacks autonomous chaperone activity; binds native substrates and targets them for recognition by DnaK. Its activity is inhibited by the binding of CbpM. This Escherichia coli O157:H7 protein is Curved DNA-binding protein.